A 207-amino-acid polypeptide reads, in one-letter code: Uracil phosphoribosyltransferase (207 aa).

Residues R77, R102, and D129–S137 contribute to the 5-phospho-alpha-D-ribose 1-diphosphate site. Residues I192 and G197–A199 contribute to the uracil site. D198 serves as a coordination point for 5-phospho-alpha-D-ribose 1-diphosphate.

Belongs to the UPRTase family. Mg(2+) serves as cofactor.

The enzyme catalyses UMP + diphosphate = 5-phospho-alpha-D-ribose 1-diphosphate + uracil. Its pathway is pyrimidine metabolism; UMP biosynthesis via salvage pathway; UMP from uracil: step 1/1. Allosterically activated by GTP. In terms of biological role, catalyzes the conversion of uracil and 5-phospho-alpha-D-ribose 1-diphosphate (PRPP) to UMP and diphosphate. This chain is Uracil phosphoribosyltransferase, found in Dictyoglomus turgidum (strain DSM 6724 / Z-1310).